Reading from the N-terminus, the 256-residue chain is 3-methyl-2-oxobutanoate hydroxymethyltransferase (256 aa).

Positions 42 and 86 each coordinate Mg(2+). 3-methyl-2-oxobutanoate-binding positions include 42–43, D86, and K116; that span reads DS. E118 serves as a coordination point for Mg(2+). E185 (proton acceptor) is an active-site residue.

Belongs to the PanB family. As to quaternary structure, homodecamer; pentamer of dimers. The cofactor is Mg(2+).

It is found in the cytoplasm. The catalysed reaction is 3-methyl-2-oxobutanoate + (6R)-5,10-methylene-5,6,7,8-tetrahydrofolate + H2O = 2-dehydropantoate + (6S)-5,6,7,8-tetrahydrofolate. It participates in cofactor biosynthesis; (R)-pantothenate biosynthesis; (R)-pantoate from 3-methyl-2-oxobutanoate: step 1/2. Its function is as follows. Catalyzes the reversible reaction in which hydroxymethyl group from 5,10-methylenetetrahydrofolate is transferred onto alpha-ketoisovalerate to form ketopantoate. The chain is 3-methyl-2-oxobutanoate hydroxymethyltransferase from Prochlorococcus marinus (strain SARG / CCMP1375 / SS120).